The sequence spans 270 residues: Cytochrome c oxidase subunit 3 (270 aa).

Transmembrane regions (helical) follow at residues Pro22–Met42, Ile46–Trp66, Ile88–Trp108, Val128–Ala148, Ser168–Ile188, Val205–Ala225, and Ile248–Trp268.

This sequence belongs to the cytochrome c oxidase subunit 3 family. In terms of assembly, component of the cytochrome c oxidase (complex IV, CIV), a multisubunit enzyme composed of a catalytic core of 3 subunits and several supernumerary subunits. The complex exists as a monomer or a dimer and forms supercomplexes (SCs) in the inner mitochondrial membrane with ubiquinol-cytochrome c oxidoreductase (cytochrome b-c1 complex, complex III, CIII).

Its subcellular location is the mitochondrion inner membrane. It catalyses the reaction 4 Fe(II)-[cytochrome c] + O2 + 8 H(+)(in) = 4 Fe(III)-[cytochrome c] + 2 H2O + 4 H(+)(out). Component of the cytochrome c oxidase, the last enzyme in the mitochondrial electron transport chain which drives oxidative phosphorylation. The respiratory chain contains 3 multisubunit complexes succinate dehydrogenase (complex II, CII), ubiquinol-cytochrome c oxidoreductase (cytochrome b-c1 complex, complex III, CIII) and cytochrome c oxidase (complex IV, CIV), that cooperate to transfer electrons derived from NADH and succinate to molecular oxygen, creating an electrochemical gradient over the inner membrane that drives transmembrane transport and the ATP synthase. Cytochrome c oxidase is the component of the respiratory chain that catalyzes the reduction of oxygen to water. Electrons originating from reduced cytochrome c in the intermembrane space (IMS) are transferred via the dinuclear copper A center (CU(A)) of subunit 2 and heme A of subunit 1 to the active site in subunit 1, a binuclear center (BNC) formed by heme A3 and copper B (CU(B)). The BNC reduces molecular oxygen to 2 water molecules using 4 electrons from cytochrome c in the IMS and 4 protons from the mitochondrial matrix. This chain is Cytochrome c oxidase subunit 3 (COX3), found in Vanderwaltozyma polyspora (strain ATCC 22028 / DSM 70294 / BCRC 21397 / CBS 2163 / NBRC 10782 / NRRL Y-8283 / UCD 57-17) (Kluyveromyces polysporus).